Here is a 247-residue protein sequence, read N- to C-terminus: Myeloid leukemia factor 2 (247 aa).

The interval 122–247 is disordered; the sequence is ETSEMRSAPG…PSRQSRRYDW (126 aa). Over residues 134-144 the composition is skewed to basic and acidic residues; that stretch reads RETRRTVRDSD. Positions 154 to 169 are enriched in basic residues; it reads HHIRDRAHILQRSRNH. A compositionally biased stretch (basic and acidic residues) spans 170–179; it reads RTGDQEERQD. Residues 182–192 show a composition bias toward acidic residues; it reads NLDESEAAAFD. Residues 193–225 are compositionally biased toward basic and acidic residues; it reads DEWRRETSRYRQQRPLEFRRHEASVGGGRRAEG. Ser216, Ser237, and Ser239 each carry phosphoserine.

Belongs to the MLF family.

The protein resides in the cytoplasm. Its subcellular location is the nucleus. The chain is Myeloid leukemia factor 2 (Mlf2) from Mus musculus (Mouse).